The sequence spans 232 residues: MERCPSLGVTLYALVVVLGLRAAPAGGQHYLHIRPAPSDNLPLVDLIEHPDPIFDPKEKDLNETLLRSLLGGHYDPGFMATSPPEDRPGGGGGPAGGAEDLAELDQLLRQRPSGAMPSEIKGLEFSEGLAQGKKQRLSKKLRRKLQMWLWSQTFCPVLYAWNDLGSRFWPRYVKVGSCFSKRSCSVPEGMVCKPSKSVHLTVLRWRCQRRGGQRCGWIPIQYPIISECKCSC.

Positions Met-1 to Gly-27 are cleaved as a signal peptide. The N-linked (GlcNAc...) asparagine glycan is linked to Asn-62. Residues Gly-77 to Glu-99 form a disordered region. Disulfide bonds link Cys-155–Cys-192, Cys-178–Cys-228, Cys-184–Cys-230, and Cys-207–Cys-215.

Belongs to the noggin family. Homodimer. Interacts with GDF5; inhibits chondrocyte differentiation. Expressed in condensing cartilage and immature chondrocytes.

The protein resides in the secreted. In terms of biological role, essential for cartilage morphogenesis and joint formation. Inhibitor of bone morphogenetic proteins (BMP) signaling which is required for growth and patterning of the neural tube and somite. Inhibits chondrocyte differentiation through its interaction with GDF5 and, probably, GDF6. This is Noggin (Nog) from Mus musculus (Mouse).